A 397-amino-acid polypeptide reads, in one-letter code: Protein Mx1 (397 aa).

It belongs to the TRAFAC class dynamin-like GTPase superfamily. Dynamin/Fzo/YdjA family.

This is Protein Mx1 (Mx1) from Mus musculus (Mouse).